A 140-amino-acid chain; its full sequence is RxLR effector protein CRE9 (140 aa).

Residues 1–24 form the signal peptide; sequence MRTSVFVALVVATFVATCISFTSA. Positions 43 to 61 match the RxLR-dEER motif; the sequence is RTLAEADDWWLASTNTEER. The helical transmembrane segment at 119–139 threads the bilayer; that stretch reads LKILYGALLAGLIIVGVEAML.

Belongs to the RxLR effector family.

The protein localises to the secreted. It localises to the host cell. Its subcellular location is the membrane. Its function is as follows. Effector that is involved in host plant infection. Contributes to virulence during the early infection stage, by inhibiting plant defense responses induced by both PAMP-triggered immunity (PTI) and effector-triggered immunity (ETI). This chain is RxLR effector protein CRE9, found in Phytophthora infestans (strain T30-4) (Potato late blight agent).